The primary structure comprises 471 residues: 6-phosphofructo-2-kinase/fructose-2,6-bisphosphatase 1 (471 aa).

Residue serine 2 is modified to N-acetylserine. Residues 2 to 250 (SQEMGELTQT…VYYLMNIHVT (249 aa)) form a 6-phosphofructo-2-kinase region. Serine 33 carries the phosphoserine; by PKA modification. 49–57 (GLPARGKTY) contributes to the ATP binding site. Positions 82 and 105 each coordinate beta-D-fructose 6-phosphate. Residue aspartate 131 is part of the active site. Beta-D-fructose 6-phosphate is bound by residues threonine 133 and arginine 139. Serine 141 carries the phosphoserine modification. Cysteine 161 is an active-site residue. Residue 170–175 (NIRQVK) participates in ATP binding. 3 residues coordinate beta-D-fructose 6-phosphate: lysine 175, arginine 196, and tyrosine 200. Positions 251–471 (PRSIYLCRHG…EALDTVPAHY (221 aa)) are fructose-2,6-bisphosphatase. Arginine 258 provides a ligand contact to beta-D-fructose 2,6-bisphosphate. Histidine 259 acts as the Tele-phosphohistidine intermediate in catalysis. 3 residues coordinate beta-D-fructose 2,6-bisphosphate: asparagine 265, glycine 271, and arginine 308. Catalysis depends on glutamate 328, which acts as the Proton donor/acceptor. Positions 339, 353, 357, 368, 394, and 398 each coordinate beta-D-fructose 2,6-bisphosphate. 350-353 (FALR) contributes to the ATP binding site. ATP contacts are provided by residues 394–398 (QAVMR) and tyrosine 430.

In the C-terminal section; belongs to the phosphoglycerate mutase family. As to quaternary structure, homodimer. In terms of tissue distribution, liver.

It carries out the reaction beta-D-fructose 2,6-bisphosphate + H2O = beta-D-fructose 6-phosphate + phosphate. It catalyses the reaction beta-D-fructose 6-phosphate + ATP = beta-D-fructose 2,6-bisphosphate + ADP + H(+). Phosphorylation at Ser-33 inhibits the kinase and activates the bisphosphatase. Its function is as follows. Synthesis and degradation of fructose 2,6-bisphosphate. In Bos taurus (Bovine), this protein is 6-phosphofructo-2-kinase/fructose-2,6-bisphosphatase 1.